The chain runs to 347 residues: DnaJ protein ERDJ3B (347 aa).

The signal sequence occupies residues 1 to 23 (MAAPRWIGPLLLLLLHFVAAVAG). The J domain occupies 25 to 90 (SYYDVLQVPK…EKRKIYDRYG (66 aa)).

In terms of assembly, interacts with BIP1.

It localises to the endoplasmic reticulum. In terms of biological role, may play a role in protein folding in the endoplasmic reticulum. This chain is DnaJ protein ERDJ3B, found in Oryza sativa subsp. japonica (Rice).